Consider the following 264-residue polypeptide: uncharacterized protein (264 aa).

This is an uncharacterized protein from Bacillus subtilis (strain 168).